The sequence spans 335 residues: N-acetylglucosaminyl-phosphatidylinositol de-N-acetylase (335 aa).

A helical transmembrane segment spans residues 3-23 (SAFTFLSLAIFPLALFIFWTL). N-linked (GlcNAc...) asparagine glycans are attached at residues N128 and N153.

The protein belongs to the PIGL family.

The protein resides in the endoplasmic reticulum membrane. It catalyses the reaction a 6-(N-acetyl-alpha-D-glucosaminyl)-1-(1,2-diacyl-sn-glycero-3-phospho)-1D-myo-inositol + H2O = a 6-(alpha-D-glucosaminyl)-1-(1,2-diacyl-sn-glycero-3-phospho)-1D-myo-inositol + acetate. Its pathway is glycolipid biosynthesis; glycosylphosphatidylinositol-anchor biosynthesis. Its function is as follows. Involved in the second step of GPI biosynthesis. De-N-acetylation of N-acetylglucosaminyl-phosphatidylinositol. This chain is N-acetylglucosaminyl-phosphatidylinositol de-N-acetylase, found in Arthroderma benhamiae (strain ATCC MYA-4681 / CBS 112371) (Trichophyton mentagrophytes).